The following is a 503-amino-acid chain: Lycopene beta cyclase, chloroplastic/chromoplastic (503 aa).

A chloroplast and chromoplast-targeting transit peptide spans 1–85 (MDTLLRTHNR…DLPLYDPSKA (85 aa)). Residue 90–117 (LAVVGGGPLARSCSTSLGGGLSVVSIDP) coordinates NAD(+).

It belongs to the lycopene cyclase family.

The protein resides in the plastid. It is found in the chloroplast. The protein localises to the chromoplast. Its subcellular location is the chromoplast membrane. It localises to the chloroplast membrane. It carries out the reaction a carotenoid psi-end group = a carotenoid beta-end derivative. It participates in carotenoid biosynthesis; beta-carotene biosynthesis. The protein operates within carotenoid biosynthesis; beta-zeacarotene biosynthesis. Its function is as follows. Catalyzes the double cyclization reaction which converts lycopene to beta-carotene and neurosporene to beta-zeacarotene. In Narcissus pseudonarcissus (Daffodil), this protein is Lycopene beta cyclase, chloroplastic/chromoplastic (LCY1).